The chain runs to 637 residues: tRNA uridine 5-carboxymethylaminomethyl modification enzyme MnmG (637 aa).

FAD is bound by residues 15–20, I127, and S182; that span reads GAGHAG. Residue 276-290 coordinates NAD(+); it reads GPRYCPSIEDKIVRF. Residue Q373 participates in FAD binding.

It belongs to the MnmG family. In terms of assembly, homodimer. Heterotetramer of two MnmE and two MnmG subunits. FAD is required as a cofactor.

It localises to the cytoplasm. Its function is as follows. NAD-binding protein involved in the addition of a carboxymethylaminomethyl (cmnm) group at the wobble position (U34) of certain tRNAs, forming tRNA-cmnm(5)s(2)U34. The protein is tRNA uridine 5-carboxymethylaminomethyl modification enzyme MnmG of Streptococcus pneumoniae (strain ATCC BAA-255 / R6).